The primary structure comprises 361 residues: Probable dual-specificity RNA methyltransferase RlmN (361 aa).

Residue Glu91 is the Proton acceptor of the active site. Residues 97–329 (QHYGLSVCVT…KKKGGNCVVR (233 aa)) enclose the Radical SAM core domain. The cysteines at positions 104 and 340 are disulfide-linked. [4Fe-4S] cluster-binding residues include Cys111, Cys115, and Cys118. Residues 163–164 (GE), Ser195, 218–220 (SLH), and Asn296 each bind S-adenosyl-L-methionine. Cys340 (S-methylcysteine intermediate) is an active-site residue.

This sequence belongs to the radical SAM superfamily. RlmN family. [4Fe-4S] cluster is required as a cofactor.

The protein localises to the cytoplasm. The catalysed reaction is adenosine(2503) in 23S rRNA + 2 reduced [2Fe-2S]-[ferredoxin] + 2 S-adenosyl-L-methionine = 2-methyladenosine(2503) in 23S rRNA + 5'-deoxyadenosine + L-methionine + 2 oxidized [2Fe-2S]-[ferredoxin] + S-adenosyl-L-homocysteine. The enzyme catalyses adenosine(37) in tRNA + 2 reduced [2Fe-2S]-[ferredoxin] + 2 S-adenosyl-L-methionine = 2-methyladenosine(37) in tRNA + 5'-deoxyadenosine + L-methionine + 2 oxidized [2Fe-2S]-[ferredoxin] + S-adenosyl-L-homocysteine. In terms of biological role, specifically methylates position 2 of adenine 2503 in 23S rRNA and position 2 of adenine 37 in tRNAs. This chain is Probable dual-specificity RNA methyltransferase RlmN, found in Streptococcus pneumoniae (strain Hungary19A-6).